The primary structure comprises 595 residues: D-xylonate dehydratase (595 aa).

Cys64 contributes to the [2Fe-2S] cluster binding site. A Mg(2+)-binding site is contributed by Glu96. Cys132 serves as a coordination point for [2Fe-2S] cluster. Asp133 is a Mg(2+) binding site. Cys205 is a binding site for [2Fe-2S] cluster. Glu467 contributes to the Mg(2+) binding site.

Belongs to the IlvD/Edd family. As to quaternary structure, homotetramer. It depends on [2Fe-2S] cluster as a cofactor. The cofactor is Mg(2+).

The enzyme catalyses D-xylonate = 2-dehydro-3-deoxy-D-arabinonate + H2O. The catalysed reaction is D-gluconate = 2-dehydro-3-deoxy-D-gluconate + H2O. Its pathway is carbohydrate metabolism; D-xylose degradation. Functionally, catalyzes the dehydration of D-xylonate to 2-dehydro-3-deoxy-D-arabinonate during D-xylose degradation. Can also dehydrate D-gluconate, with similar catalytic efficiency. Has weak activity with D-galactonate, D-fuconate and L-arabinonate. This Caulobacter vibrioides (strain ATCC 19089 / CIP 103742 / CB 15) (Caulobacter crescentus) protein is D-xylonate dehydratase.